Reading from the N-terminus, the 93-residue chain is Sm-like protein LSM2 (93 aa).

In terms of domain architecture, Sm spans 2 to 76 (LFFSYFKDLV…VRYVQLPKDG (75 aa)).

The protein belongs to the snRNP Sm proteins family. Component of the heptameric LSM1-LSM7 complex that forms a seven-membered ring structure with a donut shape. The LSM subunits are arranged in the order LSM1, LSM2, LSM3, LSM6, LSM5, LSM7 and LSM4. LSM2 subunit interacts only with its two neighboring subunits, LSM1A or LSM1B and LSM3A or LSM3B. Component of the heptameric LSM2-LSM8 complex that forms a seven-membered ring structure with a donut shape. The LSM subunits are arranged in the order LSM8, LSM2, LSM3, LSM6, LSM5, LSM7 and LSM4. LSM2 subunit interacts only with its two neighboring subunits, LSM8 and LSM3A or LSM3B. As to expression, expressed in roots, leaves, stems, flowers and siliques.

Its subcellular location is the cytoplasm. The protein localises to the nucleus. In terms of biological role, component of LSM protein complexes, which are involved in RNA processing. Component of the cytoplasmic LSM1-LSM7 complex which is involved in mRNA degradation by promoting decapping and leading to accurate 5'-3' mRNA decay. The cytoplasmic LSM1-LSM7 complex regulates developmental gene expression by the decapping of specific development-related transcripts. Component of the nuclear LSM2-LSM8 complex which is involved splicing nuclear mRNAs. LSM2-LSM8 binds directly to the U6 small nuclear RNAs (snRNAs) and is essential for accurate splicing of selected development-related mRNAs through the stabilization of the spliceosomal U6 snRNA. Plays a critical role in the regulation of development-related gene expression. In Arabidopsis thaliana (Mouse-ear cress), this protein is Sm-like protein LSM2.